The primary structure comprises 451 residues: MPSVVSPQDRLQDDAPAAQLRRAEPCLWLNPHRQPIPAARQAVAGDHISLDDTKEAAARFARFAPLLEGVFPELQATGGVIESPLLPASSLHAAAGLVAGQGALWIKADHRLPVAGSIKARGGIHEVLELAERLALQHGLLTPQSDADDYRALANPAARAVFARYTVAVGSTGNLGLSIGVAASALGFHAVVHMSADAKEWKKQRLRQRGVQVVEHAGDYEGAVAAGRAQAAQDPFSHFVDDERSLSLLLGYSAAALHLRQQLQDAGIAVDAQHPLFVYLPCGVGGAPAGITFGLRQVLGAHVHCFFAEPVQSPCFMVQMMAGQGAHPSVYDWGLTNRTEADGLAVPRASLPAAELMEPLLSGCFTVCDDTLFRQLVQVLDATGERIEPSAAAGLSGPGFLTGTETGRTWLHAQGLWPHLAQATHLVWTTGGLYVPPEAYARFEERGRALG.

Lysine 119 is subject to N6-(pyridoxal phosphate)lysine.

It belongs to the serine/threonine dehydratase family. DsdA subfamily. It depends on pyridoxal 5'-phosphate as a cofactor.

It catalyses the reaction D-serine = pyruvate + NH4(+). This Acidovorax ebreus (strain TPSY) (Diaphorobacter sp. (strain TPSY)) protein is Probable D-serine dehydratase.